Here is a 656-residue protein sequence, read N- to C-terminus: ATP-dependent RNA helicase MRH4, mitochondrial (656 aa).

A mitochondrion-targeting transit peptide spans 1 to 46 (MTSFSHLSRLRMSAFLPHVCLQCRLKTVSSLPAQSSASSLLQAVRH). Residues 42-125 (QAVRHASSAR…KDKDGSEKKQ (84 aa)) are disordered. Polar residues predominate over residues 60 to 71 (MTLSPNVAQSTV). Residues 96-125 (NLRDRQRPRSQAELKRTSFKKDKDGSEKKQ) show a composition bias toward basic and acidic residues. The Q motif motif lies at 157–190 (TSFDQFDLLPSVRQSVYDSALPGLEYVTPTPIQR). The region spanning 210–431 (QEDMPRFDQY…RERFPQIRRL (222 aa)) is the Helicase ATP-binding domain. 223 to 230 (AETGSGKT) serves as a coordination point for ATP. Residues 246 to 270 (AKDKEEEERMAKEELEKEQEQAKEK) form a disordered region. The short motif at 378-381 (DEAD) is the DEAD box element. Residues 480-656 (DVGYQVTGQK…EAMYRGQALI (177 aa)) enclose the Helicase C-terminal domain.

Belongs to the DEAD box helicase family. MRH4 subfamily.

It is found in the mitochondrion. It carries out the reaction ATP + H2O = ADP + phosphate + H(+). Functionally, ATP-binding RNA helicase involved in mitochondrial RNA metabolism. Required for maintenance of mitochondrial DNA. The chain is ATP-dependent RNA helicase MRH4, mitochondrial (MRH4) from Coccidioides immitis (strain RS) (Valley fever fungus).